A 385-amino-acid chain; its full sequence is Flap endonuclease 1 (385 aa).

The tract at residues 1–105 is N-domain; that stretch reads MGIKGLNAII…HELSKRSARR (105 aa). Mg(2+) is bound at residue aspartate 34. Residues arginine 47 and arginine 71 each contribute to the DNA site. Aspartate 87, glutamate 156, glutamate 158, aspartate 177, and aspartate 179 together coordinate Mg(2+). The interval 120-251 is I-domain; sequence EKLKHERRLV…VTALKLIKEH (132 aa). Glutamate 156 contacts DNA. DNA contacts are provided by glycine 229 and aspartate 231. Mg(2+) is bound at residue aspartate 231. Residues 338-346 are interaction with PCNA; it reads VQGRLDGFF. The segment covering 356 to 370 has biased composition (low complexity); sequence LAAANAKAKSTKAGK. The interval 356–385 is disordered; the sequence is LAAANAKAKSTKAGKQATKGKVGKPGRPRK. Over residues 376–385 the composition is skewed to basic residues; the sequence is KVGKPGRPRK.

The protein belongs to the XPG/RAD2 endonuclease family. FEN1 subfamily. As to quaternary structure, interacts with PCNA. Three molecules of FEN1 bind to one PCNA trimer with each molecule binding to one PCNA monomer. PCNA stimulates the nuclease activity without altering cleavage specificity. Mg(2+) serves as cofactor. In terms of processing, phosphorylated. Phosphorylation upon DNA damage induces relocalization to the nuclear plasma.

Its subcellular location is the nucleus. The protein localises to the nucleolus. It is found in the nucleoplasm. It localises to the mitochondrion. Structure-specific nuclease with 5'-flap endonuclease and 5'-3' exonuclease activities involved in DNA replication and repair. During DNA replication, cleaves the 5'-overhanging flap structure that is generated by displacement synthesis when DNA polymerase encounters the 5'-end of a downstream Okazaki fragment. It enters the flap from the 5'-end and then tracks to cleave the flap base, leaving a nick for ligation. Also involved in the long patch base excision repair (LP-BER) pathway, by cleaving within the apurinic/apyrimidinic (AP) site-terminated flap. Acts as a genome stabilization factor that prevents flaps from equilibrating into structures that lead to duplications and deletions. Also possesses 5'-3' exonuclease activity on nicked or gapped double-stranded DNA, and exhibits RNase H activity. Also involved in replication and repair of rDNA and in repairing mitochondrial DNA. In Lachancea thermotolerans (strain ATCC 56472 / CBS 6340 / NRRL Y-8284) (Yeast), this protein is Flap endonuclease 1.